The sequence spans 351 residues: Biotin synthase (351 aa).

The Radical SAM core domain maps to 42–269 (NEVQVSTLLS…KSHVRLSAGR (228 aa)). [4Fe-4S] cluster contacts are provided by C57, C61, and C64. The [2Fe-2S] cluster site is built by C101, C132, C192, and R264.

It belongs to the radical SAM superfamily. Biotin synthase family. As to quaternary structure, homodimer. Requires [4Fe-4S] cluster as cofactor. [2Fe-2S] cluster serves as cofactor.

The catalysed reaction is (4R,5S)-dethiobiotin + (sulfur carrier)-SH + 2 reduced [2Fe-2S]-[ferredoxin] + 2 S-adenosyl-L-methionine = (sulfur carrier)-H + biotin + 2 5'-deoxyadenosine + 2 L-methionine + 2 oxidized [2Fe-2S]-[ferredoxin]. The protein operates within cofactor biosynthesis; biotin biosynthesis; biotin from 7,8-diaminononanoate: step 2/2. Catalyzes the conversion of dethiobiotin (DTB) to biotin by the insertion of a sulfur atom into dethiobiotin via a radical-based mechanism. This chain is Biotin synthase, found in Psychromonas ingrahamii (strain DSM 17664 / CCUG 51855 / 37).